Consider the following 83-residue polypeptide: Small ribosomal subunit protein bS18 (83 aa).

The interval 1-23 (MKQRNNAKRVRLEQTRRPKKNPL) is disordered.

This sequence belongs to the bacterial ribosomal protein bS18 family. As to quaternary structure, part of the 30S ribosomal subunit. Forms a tight heterodimer with protein bS6.

Binds as a heterodimer with protein bS6 to the central domain of the 16S rRNA, where it helps stabilize the platform of the 30S subunit. The chain is Small ribosomal subunit protein bS18 from Corynebacterium efficiens (strain DSM 44549 / YS-314 / AJ 12310 / JCM 11189 / NBRC 100395).